The chain runs to 287 residues: Protease HtpX (287 aa).

Transmembrane regions (helical) follow at residues 4-24 (IFLL…VMSI) and 33-53 (GGLL…SLAI). Residue His-139 participates in Zn(2+) binding. Glu-140 is an active-site residue. Position 143 (His-143) interacts with Zn(2+). 2 helical membrane-spanning segments follow: residues 154–174 (LIQG…AGII) and 195–215 (AVVF…VAYF). Glu-220 provides a ligand contact to Zn(2+).

It belongs to the peptidase M48B family. It depends on Zn(2+) as a cofactor.

The protein resides in the cell inner membrane. In Shewanella sp. (strain ANA-3), this protein is Protease HtpX.